We begin with the raw amino-acid sequence, 106 residues long: NADH-quinone oxidoreductase subunit K (106 aa).

Helical transmembrane passes span leucine 9–leucine 29, isoleucine 35–phenylalanine 55, and phenylalanine 70–phenylalanine 90.

This sequence belongs to the complex I subunit 4L family. In terms of assembly, NDH-1 is composed of 14 different subunits. Subunits NuoA, H, J, K, L, M, N constitute the membrane sector of the complex.

Its subcellular location is the cell inner membrane. The enzyme catalyses a quinone + NADH + 5 H(+)(in) = a quinol + NAD(+) + 4 H(+)(out). Its function is as follows. NDH-1 shuttles electrons from NADH, via FMN and iron-sulfur (Fe-S) centers, to quinones in the respiratory chain. The immediate electron acceptor for the enzyme in this species is believed to be ubiquinone. Couples the redox reaction to proton translocation (for every two electrons transferred, four hydrogen ions are translocated across the cytoplasmic membrane), and thus conserves the redox energy in a proton gradient. This Granulibacter bethesdensis (strain ATCC BAA-1260 / CGDNIH1) protein is NADH-quinone oxidoreductase subunit K.